Reading from the N-terminus, the 72-residue chain is Exodeoxyribonuclease 7 small subunit (72 aa).

Belongs to the XseB family. Heterooligomer composed of large and small subunits.

The protein resides in the cytoplasm. It carries out the reaction Exonucleolytic cleavage in either 5'- to 3'- or 3'- to 5'-direction to yield nucleoside 5'-phosphates.. In terms of biological role, bidirectionally degrades single-stranded DNA into large acid-insoluble oligonucleotides, which are then degraded further into small acid-soluble oligonucleotides. In Chlamydia trachomatis serovar A (strain ATCC VR-571B / DSM 19440 / HAR-13), this protein is Exodeoxyribonuclease 7 small subunit.